Here is a 378-residue protein sequence, read N- to C-terminus: Probable endopolygalacturonase AFUB_016610 (378 aa).

The signal sequence occupies residues 1–19; that stretch reads MLKLMGSLVLLASAAEVIA. Positions 20–35 are excised as a propeptide; that stretch reads SPAAEPVAPSTTLEKR. Cys-38 and Cys-56 are disulfide-bonded. PbH1 repeat units lie at residues 147–169, 170–200, and 201–222; these read TSSS…SING, CDGL…DIGS, and SSNI…AVNS. The active-site Proton donor is the Asp-215. A disulfide bond links Cys-217 and Cys-233. His-237 is a catalytic residue. PbH1 repeat units lie at residues 252 to 273 and 281 to 303; these read VENV…RIKA and IKGV…LIEQ. N-linked (GlcNAc...) asparagine glycosylation is present at Asn-254. An N-linked (GlcNAc...) asparagine glycan is attached at Asn-327. The cysteines at positions 345 and 350 are disulfide-linked. A glycan (N-linked (GlcNAc...) asparagine) is linked at Asn-352. Cys-369 and Cys-378 are oxidised to a cystine.

It belongs to the glycosyl hydrolase 28 family.

Its subcellular location is the secreted. The enzyme catalyses (1,4-alpha-D-galacturonosyl)n+m + H2O = (1,4-alpha-D-galacturonosyl)n + (1,4-alpha-D-galacturonosyl)m.. Functionally, involved in maceration and soft-rotting of plant tissue. Hydrolyzes the 1,4-alpha glycosidic bonds of de-esterified pectate in the smooth region of the plant cell wall. The chain is Probable endopolygalacturonase AFUB_016610 from Aspergillus fumigatus (strain CBS 144.89 / FGSC A1163 / CEA10) (Neosartorya fumigata).